The chain runs to 158 residues: S-ribosylhomocysteine lyase (158 aa).

Residues histidine 56, histidine 60, and cysteine 125 each coordinate Fe cation.

This sequence belongs to the LuxS family. In terms of assembly, homodimer. It depends on Fe cation as a cofactor.

It carries out the reaction S-(5-deoxy-D-ribos-5-yl)-L-homocysteine = (S)-4,5-dihydroxypentane-2,3-dione + L-homocysteine. Functionally, involved in the synthesis of autoinducer 2 (AI-2) which is secreted by bacteria and is used to communicate both the cell density and the metabolic potential of the environment. The regulation of gene expression in response to changes in cell density is called quorum sensing. Catalyzes the transformation of S-ribosylhomocysteine (RHC) to homocysteine (HC) and 4,5-dihydroxy-2,3-pentadione (DPD). The sequence is that of S-ribosylhomocysteine lyase from Leuconostoc mesenteroides subsp. mesenteroides (strain ATCC 8293 / DSM 20343 / BCRC 11652 / CCM 1803 / JCM 6124 / NCDO 523 / NBRC 100496 / NCIMB 8023 / NCTC 12954 / NRRL B-1118 / 37Y).